A 1315-amino-acid chain; its full sequence is Serine-aspartate repeat-containing protein D (1315 aa).

Residues 1–35 (MLNRENKTAITRKGMVSNRLNKFSIRKYTVGTASI) form the signal peptide. The YSIRK-G/S signaling motif signature appears at 23 to 34 (FSIRKYTVGTAS). The ligand binding A region stretch occupies residues 36–568 (LVGTTLIFGL…NNQSGGAGQE (533 aa)). Positions 54–185 (ESTNKELNEA…NKKVDAKTES (132 aa)) are disordered. 2 stretches are compositionally biased toward polar residues: residues 62 to 71 (EATTSASDNQ) and 94 to 108 (EMVS…SNGN). The span at 130 to 145 (KSDEQASPKSTNEDLN) shows a compositional bias: basic and acidic residues. Polar residues-rich tracts occupy residues 146-155 (TKQTISNQEA) and 163-173 (NKSVVNVQPTN). Over residues 174 to 183 (EENKKVDAKT) the composition is skewed to basic and acidic residues. 5 consecutive CNA-B domains span residues 569–680 (VYKI…IYKP), 681–791 (KYNL…YKTP), 792–901 (KYNL…FYKP), 902–1012 (TYNL…YKTP), and 1013–1123 (KYSL…EEET). 3 disordered regions span residues 857 to 883 (ETPS…TSTT), 972 to 992 (YTPT…GLTT), and 1078 to 1291 (EKPA…SNNA). Composition is skewed to polar residues over residues 860-869 (SGYTPTQVGS) and 972-981 (YTPTSVTSGN). 4 stretches are compositionally biased toward acidic residues: residues 1091-1101 (TEDDKDADGGE), 1118-1134 (YYEE…DSDS), 1142-1164 (SDSD…DSDS), and 1172-1254 (SDSD…DSDS). An LPXTG sorting signal motif is present at residues 1278 to 1282 (LPETG). Position 1281 is a pentaglycyl murein peptidoglycan amidated threonine (Thr1281). Residues 1282–1315 (GNENSGSNNATLFGGLFAALGSLLLFGRRKKQNK) constitute a propeptide, removed by sortase.

The protein belongs to the serine-aspartate repeat-containing protein (SDr) family. Interacts with host DSG1; this interaction increases S.aureus adherence to keratinocytes. Post-translationally, anchored to the cell wall by sortase A.

The protein resides in the secreted. It is found in the cell wall. Functionally, cell surface-associated calcium-binding protein which plays an important role in adhesion and pathogenesis. Mediates interactions with components of the extracellular matrix such as host DSG1 to promote bacterial adhesion to host cells. Contributes to the resistance to killing by innate immune components such as neutrophils present in blood and thus attenuates bacterial clearance. This chain is Serine-aspartate repeat-containing protein D (sdrD), found in Staphylococcus aureus (strain Newman).